The sequence spans 341 residues: Ribosomal RNA small subunit methyltransferase C (341 aa).

The protein belongs to the methyltransferase superfamily. RsmC family. In terms of assembly, monomer.

The protein localises to the cytoplasm. It catalyses the reaction guanosine(1207) in 16S rRNA + S-adenosyl-L-methionine = N(2)-methylguanosine(1207) in 16S rRNA + S-adenosyl-L-homocysteine + H(+). Its function is as follows. Specifically methylates the guanine in position 1207 of 16S rRNA in the 30S particle. This chain is Ribosomal RNA small subunit methyltransferase C, found in Shewanella halifaxensis (strain HAW-EB4).